We begin with the raw amino-acid sequence, 615 residues long: Dihydroxy-acid dehydratase (615 aa).

D81 serves as a coordination point for Mg(2+). C122 is a [2Fe-2S] cluster binding site. 2 residues coordinate Mg(2+): D123 and K124. The residue at position 124 (K124) is an N6-carboxylysine. C197 provides a ligand contact to [2Fe-2S] cluster. A Mg(2+)-binding site is contributed by E494. The Proton acceptor role is filled by S520.

This sequence belongs to the IlvD/Edd family. As to quaternary structure, homodimer. Requires [2Fe-2S] cluster as cofactor. Mg(2+) is required as a cofactor.

The enzyme catalyses (2R)-2,3-dihydroxy-3-methylbutanoate = 3-methyl-2-oxobutanoate + H2O. It catalyses the reaction (2R,3R)-2,3-dihydroxy-3-methylpentanoate = (S)-3-methyl-2-oxopentanoate + H2O. It functions in the pathway amino-acid biosynthesis; L-isoleucine biosynthesis; L-isoleucine from 2-oxobutanoate: step 3/4. Its pathway is amino-acid biosynthesis; L-valine biosynthesis; L-valine from pyruvate: step 3/4. Functions in the biosynthesis of branched-chain amino acids. Catalyzes the dehydration of (2R,3R)-2,3-dihydroxy-3-methylpentanoate (2,3-dihydroxy-3-methylvalerate) into 2-oxo-3-methylpentanoate (2-oxo-3-methylvalerate) and of (2R)-2,3-dihydroxy-3-methylbutanoate (2,3-dihydroxyisovalerate) into 2-oxo-3-methylbutanoate (2-oxoisovalerate), the penultimate precursor to L-isoleucine and L-valine, respectively. This Salinispora arenicola (strain CNS-205) protein is Dihydroxy-acid dehydratase.